Reading from the N-terminus, the 259-residue chain is GTP cyclohydrolase FolE2 (259 aa).

Belongs to the GTP cyclohydrolase IV family.

It catalyses the reaction GTP + H2O = 7,8-dihydroneopterin 3'-triphosphate + formate + H(+). The protein operates within cofactor biosynthesis; 7,8-dihydroneopterin triphosphate biosynthesis; 7,8-dihydroneopterin triphosphate from GTP: step 1/1. In terms of biological role, converts GTP to 7,8-dihydroneopterin triphosphate. This Thermosipho melanesiensis (strain DSM 12029 / CIP 104789 / BI429) protein is GTP cyclohydrolase FolE2.